Consider the following 526-residue polypeptide: MDKLQLWQRYQNWLYYHEGLGIYLDISRMRFDDPFVDRLKPKFDKAFQDMEALEAGAIANPDEGRMVGHYWLRAPELAPNDEARKEITEPLAAIADFVTKVHNTTIKPPTAEKFTDVLSIGIGGSALGPQFVAEALSSDFPPMAIHFIDNSDPAGIDRILTRLGDRLKSTLVIVTSKSGGTPETRNGMLEVKAAYEAKGLDFAPHAVAVTMPGSKMDQFAENWLARFPMQDWVGGRTSELSAVGLLPAALQGIDIQAMLAGAKEMDVATRVKDLKTNPAALLALAWYYSGNGKGEKDMVILPYKDSLLLFSRYLQQLVMESLGKETDLDGNTVYQGIAVYGNKGSTDQHAYVQQLREGVPNFFATFIEVLEDRQGESIELDPGITSGDYLSGFIQGTRQALYENNRDSVTITIPQVNPRIVGALIALYERTVSFYGSLVNVNAYHQPGVEAGKKMAASILSLQTEIQKVIKESVGSLDLVTLAEKAGDPEAVEAVYKIVRHLAANGRGVTLDGDLANPSSLKVSAG.

Residue Glu320 is the Proton donor of the active site. Residues His349 and Lys453 contribute to the active site.

This sequence belongs to the GPI family.

It is found in the cytoplasm. The catalysed reaction is alpha-D-glucose 6-phosphate = beta-D-fructose 6-phosphate. It functions in the pathway carbohydrate biosynthesis; gluconeogenesis. It participates in carbohydrate degradation; glycolysis; D-glyceraldehyde 3-phosphate and glycerone phosphate from D-glucose: step 2/4. Its function is as follows. Catalyzes the reversible isomerization of glucose-6-phosphate to fructose-6-phosphate. This chain is Glucose-6-phosphate isomerase, found in Rippkaea orientalis (strain PCC 8801 / RF-1) (Cyanothece sp. (strain PCC 8801)).